Here is a 250-residue protein sequence, read N- to C-terminus: MRTLVLLSSVAILSTLAVKCKYDGKDLENNEVITVQNAFRIKCLTEDNGSWKTEIIGCVTPDGTEINAGEKKEVGDKVHECVKSESGQVSLKESKGRTAACPGGQKHGEQWQEKSFKFRCGDGGVVKFEACVGQDGSVIPAGETGKIGGFDVKCEQHANGTITMQAANDPKSYDCTAKDGSSKKNGEEYVEGNFVRKCGDYGQGKIIGCHAENVGNTIGINQNVTSGDIVYSCTKDGSNYSFKTYSLKAN.

The N-terminal stretch at 1-17 (MRTLVLLSSVAILSTLA) is a signal peptide. N48, N159, N223, and N239 each carry an N-linked (GlcNAc...) asparagine glycan.

The protein localises to the secreted. This is an uncharacterized protein from Caenorhabditis elegans.